The primary structure comprises 177 residues: Large ribosomal subunit protein uL6 (177 aa).

Belongs to the universal ribosomal protein uL6 family. Part of the 50S ribosomal subunit.

Functionally, this protein binds to the 23S rRNA, and is important in its secondary structure. It is located near the subunit interface in the base of the L7/L12 stalk, and near the tRNA binding site of the peptidyltransferase center. In Rhizobium leguminosarum bv. trifolii (strain WSM2304), this protein is Large ribosomal subunit protein uL6.